Consider the following 129-residue polypeptide: Large-conductance mechanosensitive channel (129 aa).

The next 2 membrane-spanning stretches (helical) occupy residues 10-30 (FAVK…GAFG) and 76-96 (GAFI…FGMV).

The protein belongs to the MscL family. As to quaternary structure, homopentamer.

The protein localises to the cell inner membrane. Functionally, channel that opens in response to stretch forces in the membrane lipid bilayer. May participate in the regulation of osmotic pressure changes within the cell. This chain is Large-conductance mechanosensitive channel, found in Actinobacillus pleuropneumoniae serotype 5b (strain L20).